Here is a 101-residue protein sequence, read N- to C-terminus: Putative defensin-like protein 253 (101 aa).

The signal sequence occupies residues 1–23 (MRFASLFVVYCTFMFLDISHVKC). Disulfide bonds link C31–C84, C41–C66, C49–C76, and C64–C78.

It belongs to the DEFL family.

Its subcellular location is the secreted. The chain is Putative defensin-like protein 253 (SCRL15) from Arabidopsis thaliana (Mouse-ear cress).